The primary structure comprises 368 residues: Phosphoribosylformylglycinamidine cyclo-ligase (368 aa).

It belongs to the AIR synthase family.

The protein resides in the cytoplasm. It carries out the reaction 2-formamido-N(1)-(5-O-phospho-beta-D-ribosyl)acetamidine + ATP = 5-amino-1-(5-phospho-beta-D-ribosyl)imidazole + ADP + phosphate + H(+). It functions in the pathway purine metabolism; IMP biosynthesis via de novo pathway; 5-amino-1-(5-phospho-D-ribosyl)imidazole from N(2)-formyl-N(1)-(5-phospho-D-ribosyl)glycinamide: step 2/2. This Novosphingobium aromaticivorans (strain ATCC 700278 / DSM 12444 / CCUG 56034 / CIP 105152 / NBRC 16084 / F199) protein is Phosphoribosylformylglycinamidine cyclo-ligase.